The primary structure comprises 440 residues: C4-dicarboxylate transport protein (440 aa).

A run of 8 helical transmembrane segments spans residues 8 to 28 (LYLQVLLAVVLGALVGHLFPA), 40 to 60 (FIKLVKMLIAPIVFATVVTGI), 74 to 94 (LKGLLYFEVLTTVALAIGLVV), 147 to 167 (GDILQVLLFSVLFGAALAALK), 187 to 207 (IVGFVMRLAPVGAFGAMAFTV), 221 to 241 (LIACFYATSALFVVLMLGLVL), 288 to 308 (VVGLVVPMGYSFNLDGTSIYL), and 354 to 374 (AATLSAVGNIPVAGLALLLGV). Residues 419–440 (EEVEPANEPEPPAIPAGAGLHG) are disordered.

Belongs to the dicarboxylate/amino acid:cation symporter (DAACS) (TC 2.A.23) family.

The protein localises to the cell inner membrane. Responsible for the transport of dicarboxylates such as succinate, fumarate, and malate from the periplasm across the membrane. The chain is C4-dicarboxylate transport protein from Anaeromyxobacter sp. (strain K).